A 936-amino-acid polypeptide reads, in one-letter code: 2-oxoglutarate dehydrogenase E1 component (936 aa).

The protein belongs to the alpha-ketoglutarate dehydrogenase family. As to quaternary structure, homodimer. Part of the 2-oxoglutarate dehydrogenase (OGDH) complex composed of E1 (2-oxoglutarate dehydrogenase), E2 (dihydrolipoamide succinyltransferase) and E3 (dihydrolipoamide dehydrogenase); the complex contains multiple copies of the three enzymatic components (E1, E2 and E3). The cofactor is thiamine diphosphate.

The enzyme catalyses N(6)-[(R)-lipoyl]-L-lysyl-[protein] + 2-oxoglutarate + H(+) = N(6)-[(R)-S(8)-succinyldihydrolipoyl]-L-lysyl-[protein] + CO2. E1 component of the 2-oxoglutarate dehydrogenase (OGDH) complex which catalyzes the decarboxylation of 2-oxoglutarate, the first step in the conversion of 2-oxoglutarate to succinyl-CoA and CO(2). The polypeptide is 2-oxoglutarate dehydrogenase E1 component (sucA) (Rickettsia prowazekii (strain Madrid E)).